Here is a 198-residue protein sequence, read N- to C-terminus: MTIKLELLEAALRNALGDQLQSLTQALGEVTIVVKSHDYASAMRVLRDHADLRFEEMIDLCGVDYSTYGDGLWEGPRFAVVSHLLSIKHNWRVRVRVFAADDEMPVVASMIDIWATANWYEREAFDFFGILFEGHNDLRRILTDYGFIGHPFRKDFPVSGYVEMRYDPEQKRVIYQPVTIDPRENVPRVIREEQYGAK.

This sequence belongs to the complex I 30 kDa subunit family. NDH-1 is composed of 14 different subunits. Subunits NuoB, C, D, E, F, and G constitute the peripheral sector of the complex.

It localises to the cell inner membrane. It catalyses the reaction a quinone + NADH + 5 H(+)(in) = a quinol + NAD(+) + 4 H(+)(out). Its function is as follows. NDH-1 shuttles electrons from NADH, via FMN and iron-sulfur (Fe-S) centers, to quinones in the respiratory chain. The immediate electron acceptor for the enzyme in this species is believed to be ubiquinone. Couples the redox reaction to proton translocation (for every two electrons transferred, four hydrogen ions are translocated across the cytoplasmic membrane), and thus conserves the redox energy in a proton gradient. In Janthinobacterium sp. (strain Marseille) (Minibacterium massiliensis), this protein is NADH-quinone oxidoreductase subunit C.